The chain runs to 282 residues: uncharacterized protein (282 aa).

4 helical membrane-spanning segments follow: residues 130–150, 170–190, 191–211, and 223–243; these read WALL…GFGL, STSW…WPSA, AAGL…YVIV, and ILTH…WRSA. Residues 263 to 282 are disordered; that stretch reads DNASRGRRRGHLWPTDGSAA.

It is found in the cell membrane. This is an uncharacterized protein from Mycobacterium tuberculosis (strain CDC 1551 / Oshkosh).